The chain runs to 340 residues: Ketol-acid reductoisomerase (NADP(+)) (340 aa).

One can recognise a KARI N-terminal Rossmann domain in the interval 1–183 (MAVTVYYDKD…GAGRTGIIET (183 aa)). Residues 26–29 (FGSQ), Lys-49, Ser-54, and 84–87 (DELQ) each bind NADP(+). His-109 is a catalytic residue. Residue Gly-135 participates in NADP(+) binding. One can recognise a KARI C-terminal knotted domain in the interval 184–329 (TFKDETETDL…EKLRAMMPWI (146 aa)). Residues Asp-192, Glu-196, Glu-228, and Glu-232 each coordinate Mg(2+). Ser-253 is a substrate binding site.

It belongs to the ketol-acid reductoisomerase family. Mg(2+) serves as cofactor.

It catalyses the reaction (2R)-2,3-dihydroxy-3-methylbutanoate + NADP(+) = (2S)-2-acetolactate + NADPH + H(+). The catalysed reaction is (2R,3R)-2,3-dihydroxy-3-methylpentanoate + NADP(+) = (S)-2-ethyl-2-hydroxy-3-oxobutanoate + NADPH + H(+). Its pathway is amino-acid biosynthesis; L-isoleucine biosynthesis; L-isoleucine from 2-oxobutanoate: step 2/4. It participates in amino-acid biosynthesis; L-valine biosynthesis; L-valine from pyruvate: step 2/4. Involved in the biosynthesis of branched-chain amino acids (BCAA). Catalyzes an alkyl-migration followed by a ketol-acid reduction of (S)-2-acetolactate (S2AL) to yield (R)-2,3-dihydroxy-isovalerate. In the isomerase reaction, S2AL is rearranged via a Mg-dependent methyl migration to produce 3-hydroxy-3-methyl-2-ketobutyrate (HMKB). In the reductase reaction, this 2-ketoacid undergoes a metal-dependent reduction by NADPH to yield (R)-2,3-dihydroxy-isovalerate. In Campylobacter hominis (strain ATCC BAA-381 / DSM 21671 / CCUG 45161 / LMG 19568 / NCTC 13146 / CH001A), this protein is Ketol-acid reductoisomerase (NADP(+)).